Consider the following 87-residue polypeptide: uncharacterized protein (87 aa).

It to B.subtilis XkdR.

This is an uncharacterized protein from Bacillus subtilis (strain 168).